We begin with the raw amino-acid sequence, 512 residues long: Nephrocan (512 aa).

The signal sequence occupies residues 1 to 19 (MHPLWAFLLGLSLTNGLSA). The region spanning 20–44 (NCPGRCSCDSMQSVQCYRLMELPSG) is the LRRNT domain. 17 LRR repeats span residues 45–69 (IPSTTKRLYISHSRIQHLQLSNFTG), 71–93 (LALEDFILLASGTESIENDTFKT), 94–117 (LSTLKTLELWKNKLRQVPSALPAN), 119–138 (EVLKLNDNAICALRGSEFEG), 139–162 (LKNLKVLELKNNLISSLSPSMLSP), 164–185 (ASLQSLMVDGNNIESVVGPLSL), 186–208 (PHLKYMSMENNQLHLIPGNVFTS), 210–232 (QNLQFLSFSGNFLTKIPINLPKS), 234–253 (LSLKMERNQLKVVRFRDMKH), 254–276 (LENLSHLYLSENFLSSIDGAQQL), 277–299 (TNLTTLEVSQNQLQMLPPRLPSR), 301–320 (QKLDCSSNFIQRVTAPEFQD), 321–344 (LRDLKHLFLDNNVVSLFEAGALQR), 346–371 (SQLSNLALEQNLLLSIPLRLPKTLAR), 373–389 (DLKGNAIQDMAERELRD), 390–413 (LKQLQVLNLRNNRISALDFKALEG), and 415–442 (PRLRHLYLDGNPWNCTCSLLRAREVLKA). N-linked (GlcNAc...) asparagine glycosylation occurs at N66. Basic and acidic residues predominate over residues 474-484 (EHHLQQSEKSK). The disordered stretch occupies residues 474–512 (EHHLQQSEKSKETKKKPKPEDSSSIRLNMDDDDDDYEID). Over residues 503–512 (DDDDDDYEID) the composition is skewed to acidic residues.

The protein belongs to the small leucine-rich proteoglycan (SLRP) family. N-glycosylated. In terms of tissue distribution, expressed at highest levels in the kidney, where it is primarily detected in the epithelial cells of distal tubules and collecting ducts, and more weakly in proximal epithelial cells. Expressed at lower levels in heart and lung (at protein level). Detected in skeletal muscle.

The protein localises to the secreted. Functionally, may inhibit TGF-beta signaling. The chain is Nephrocan from Mus musculus (Mouse).